We begin with the raw amino-acid sequence, 40 residues long: Photosystem II reaction center protein J (40 aa).

Residues 10-30 (LWIIGTVTGILVIGLIGIFFF) form a helical membrane-spanning segment.

This sequence belongs to the PsbJ family. PSII is composed of 1 copy each of membrane proteins PsbA, PsbB, PsbC, PsbD, PsbE, PsbF, PsbH, PsbI, PsbJ, PsbK, PsbL, PsbM, PsbT, PsbX, PsbY, PsbZ, Psb30/Ycf12, at least 3 peripheral proteins of the oxygen-evolving complex and a large number of cofactors. It forms dimeric complexes.

Its subcellular location is the plastid membrane. Its function is as follows. One of the components of the core complex of photosystem II (PSII). PSII is a light-driven water:plastoquinone oxidoreductase that uses light energy to abstract electrons from H(2)O, generating O(2) and a proton gradient subsequently used for ATP formation. It consists of a core antenna complex that captures photons, and an electron transfer chain that converts photonic excitation into a charge separation. This Cuscuta exaltata (Tall dodder) protein is Photosystem II reaction center protein J.